The primary structure comprises 1937 residues: Collagen-like protein 7 (1937 aa).

N-linked (GlcNAc...) asparagine; by host glycosylation is found at Asn-6 and Asn-21. 4 disordered regions span residues Cys-88 to Lys-248, Asn-294 to Gly-531, Leu-583 to Val-643, and Ile-670 to Thr-1144. 5 consecutive Collagen-like domains span residues Gly-102 to Lys-161, Gly-168 to Ile-227, Gly-297 to Lys-356, Gly-363 to Lys-422, and Gly-453 to Lys-512. Basic and acidic residues predominate over residues Lys-296–Asp-514. Residue Asn-515 is glycosylated (N-linked (GlcNAc...) asparagine; by host). Basic and acidic residues-rich tracts occupy residues Lys-584–Lys-605, Lys-614–Asp-625, and Ile-670–Lys-899. Collagen-like domains lie at Gly-672–Lys-731, Gly-735–Ile-854, Gly-867–Lys-926, Gly-936–Lys-995, and Gly-1023–Thr-1142. Residue Asn-902 is glycosylated (N-linked (GlcNAc...) asparagine; by host). A compositionally biased stretch (basic and acidic residues) spans Tyr-907–Asp-1141. N-linked (GlcNAc...) asparagine; by host glycosylation is found at Asn-1178, Asn-1192, Asn-1212, Asn-1217, Asn-1245, Asn-1246, Asn-1255, Asn-1317, Asn-1422, Asn-1427, Asn-1432, Asn-1443, Asn-1452, Asn-1477, Asn-1494, Asn-1506, Asn-1513, Asn-1533, Asn-1598, Asn-1619, Asn-1620, Asn-1632, Asn-1641, Asn-1663, Asn-1664, Asn-1672, Asn-1682, Asn-1683, Asn-1732, Asn-1735, Asn-1746, Asn-1756, Asn-1784, Asn-1842, and Asn-1934.

May be hydroxylated on lysine by the viral-encoded procollagen-lysine,2-oxoglutarate 5-dioxygenase.

The protein resides in the virion. Its function is as follows. May participate in the formation of a layer of cross-linked glycosylated fibrils at the viral surface thus giving it a hairy-like appearance. In Acanthamoeba polyphaga mimivirus (APMV), this protein is Collagen-like protein 7.